The chain runs to 381 residues: L-lactate dehydrogenase (381 aa).

The FMN hydroxy acid dehydrogenase domain occupies methionine 1 to glycine 380. Tyrosine 24 contributes to the substrate binding site. 2 residues coordinate FMN: serine 106 and glutamine 127. Tyrosine 129 is a binding site for substrate. Threonine 155 contacts FMN. Arginine 164 provides a ligand contact to substrate. Position 251 (lysine 251) interacts with FMN. Histidine 275 functions as the Proton acceptor in the catalytic mechanism. Residue arginine 278 participates in substrate binding. An FMN-binding site is contributed by aspartate 306–arginine 330.

This sequence belongs to the FMN-dependent alpha-hydroxy acid dehydrogenase family. Homotetramer. It depends on FMN as a cofactor.

Its subcellular location is the cell inner membrane. The enzyme catalyses (S)-lactate + A = pyruvate + AH2. Catalyzes the conversion of L-lactate to pyruvate. Is coupled to the respiratory chain. In Pseudomonas putida (strain W619), this protein is L-lactate dehydrogenase.